The following is a 495-amino-acid chain: Keratin, type II cuticular 87 (495 aa).

A head region spans residues 1-111 (MSCFSSRLGA…PNAQCVKHEE (111 aa)). Residues 111 to 422 (EKEQIKCLNS…RLLEGEEQRL (312 aa)) form the IF rod domain. Residues 112-146 (KEQIKCLNSKFAAFIDKVRFLEQQNKLLETKWQFY) form a coil 1A region. The tract at residues 147–156 (QNRKCCESNM) is linker 1. A coil 1B region spans residues 157–257 (EPLFEGYIEA…YEEETRLLHS (101 aa)). The linker 12 stretch occupies residues 258–274 (HISDTSVVVKMDNSRDL). The segment at 275–418 (NMDCVVAEIK…ITYRRLLEGE (144 aa)) is coil 2. The tail stretch occupies residues 419–494 (EQRLCEGVGS…TCGSSRSVRF (76 aa)).

The protein belongs to the intermediate filament family. As to quaternary structure, heterotetramer of two type I and two type II keratins.

The chain is Keratin, type II cuticular 87 from Mus musculus (Mouse).